We begin with the raw amino-acid sequence, 422 residues long: Sphingomyelin phosphodiesterase 2 (422 aa).

Glu-49 serves as a coordination point for Mg(2+). The active-site Proton acceptor is the His-272. 2 helical membrane-spanning segments follow: residues 325-345 (ALFGYVMILGLSLLVLLCVLA) and 354-374 (AIMLWTPSVGLVLGAGAVYLF). Positions 397 to 422 (TETQDLGSEPHPTHCRQQEADRAEEK) are disordered. The segment covering 412–422 (RQQEADRAEEK) has biased composition (basic and acidic residues).

Belongs to the neutral sphingomyelinase family. Requires Mg(2+) as cofactor.

It localises to the membrane. It catalyses the reaction a sphingomyelin + H2O = phosphocholine + an N-acylsphing-4-enine + H(+). The catalysed reaction is 1-O-octadecyl-sn-glycero-3-phosphocholine + H2O = 1-O-octadecyl-sn-glycerol + phosphocholine + H(+). The enzyme catalyses an N-(acyl)-sphingosylphosphocholine + H2O = an N-acyl-sphingoid base + phosphocholine + H(+). It carries out the reaction 1-hexadecanoyl-sn-glycero-3-phosphocholine + H2O = 1-hexadecanoyl-sn-glycerol + phosphocholine + H(+). It catalyses the reaction a sphingosylphosphocholine + H2O = a sphingoid base + phosphocholine + H(+). The catalysed reaction is 1-O-hexadecyl-sn-glycero-3-phosphocholine + H2O = 1-O-hexadecyl-sn-glycerol + phosphocholine + H(+). It participates in lipid metabolism; sphingolipid metabolism. Its function is as follows. Catalyzes the hydrolysis of sphingomyelin to form ceramide and phosphocholine. Ceramide mediates numerous cellular functions, such as apoptosis and growth arrest, and is capable of regulating these 2 cellular events independently. Also hydrolyzes sphingosylphosphocholine. Hydrolyze 1-acyl-2-lyso-sn-glycero-3-phosphocholine (lyso-PC) and 1-O-alkyl-2-lyso-sn-glycero-3-phosphocholine (lyso-platelet-activating factor). The sequence is that of Sphingomyelin phosphodiesterase 2 (Smpd2) from Rattus norvegicus (Rat).